Here is a 345-residue protein sequence, read N- to C-terminus: UDP-N-acetylenolpyruvoylglucosamine reductase (345 aa).

The 196-residue stretch at 59–254 folds into the FAD-binding PCMH-type domain; that stretch reads VGGPAACLAR…RKATQPLGRP (196 aa). Arginine 209 is a catalytic residue. Cysteine 258 (proton donor) is an active-site residue. Residue glutamate 328 is part of the active site.

It belongs to the MurB family. Requires FAD as cofactor.

It localises to the cytoplasm. It carries out the reaction UDP-N-acetyl-alpha-D-muramate + NADP(+) = UDP-N-acetyl-3-O-(1-carboxyvinyl)-alpha-D-glucosamine + NADPH + H(+). Its pathway is cell wall biogenesis; peptidoglycan biosynthesis. Functionally, cell wall formation. This chain is UDP-N-acetylenolpyruvoylglucosamine reductase, found in Syntrophobacter fumaroxidans (strain DSM 10017 / MPOB).